A 151-amino-acid chain; its full sequence is F-box protein GID2 (151 aa).

A compositionally biased stretch (basic and acidic residues) spans 1 to 25 (MKRSTTDSDLAGDAHNETNKKMKST). A disordered region spans residues 1–27 (MKRSTTDSDLAGDAHNETNKKMKSTEE). An F-box domain is found at 29 to 75 (EIGFSNLDENLVYEVLKHVDAKTLAMSSCVSKIWHKTAQDERLWELI).

As to quaternary structure, part of some SCF(GID2) complex, which consist of SKP1B, CUL1 cullin, GID2/SLY1 and some RING box protein. Interacts directly with SKP1A and SKP1B. Interacts directly with DELLA proteins GAI, RGA, RGL1, RGL3 and probably RGL2. May have a higher affinity for phosphorylated DELLA proteins. In terms of tissue distribution, expressed in all tissues tested, including rosette leaves, green siliques, flowers, stems, cauline leaves and seedlings.

The protein localises to the nucleus. The protein operates within protein modification; protein ubiquitination. Functionally, essential component of the SCF-type E3 ligase complex, SCF(GID2), a complex that positively regulates the gibberellin signaling pathway. Upon gibberellin treatment, the SCF(GID2) complex mediates the ubiquitination and subsequent degradation of DELLA proteins (GAI, RGA and RGL2), some repressors of the gibberellin pathway, leading to activate the pathway. This chain is F-box protein GID2 (GID2), found in Arabidopsis thaliana (Mouse-ear cress).